Consider the following 529-residue polypeptide: Probable pectinesterase/pectinesterase inhibitor 35 (529 aa).

The first 34 residues, 1–34 (MATTSFSLPNHKFGIKLMLFLVLNLLSLQTSVFA), serve as a signal peptide directing secretion. The segment at 36–180 (SSNSKFTKIS…TGLLTNSLDM (145 aa)) is pectinesterase inhibitor 35. The segment at 42-64 (TKISRHPNSDSSSRTKPSTSSNK) is disordered. A compositionally biased stretch (low complexity) spans 50–64 (SDSSSRTKPSTSSNK). 3 N-linked (GlcNAc...) asparagine glycosylation sites follow: N86, N169, and N193. Positions 228 to 514 (HAVVAADGSG…FTVSGFIDGN (287 aa)) are pectinesterase 35. T302 and Q332 together coordinate substrate. D355 serves as the catalytic Proton donor; for pectinesterase activity. D376 serves as the catalytic Nucleophile; for pectinesterase activity. 2 residues coordinate substrate: R434 and W436.

The protein in the N-terminal section; belongs to the PMEI family. It in the C-terminal section; belongs to the pectinesterase family. Expressed in siliques.

It localises to the secreted. The protein resides in the cell wall. It catalyses the reaction [(1-&gt;4)-alpha-D-galacturonosyl methyl ester](n) + n H2O = [(1-&gt;4)-alpha-D-galacturonosyl](n) + n methanol + n H(+). It participates in glycan metabolism; pectin degradation; 2-dehydro-3-deoxy-D-gluconate from pectin: step 1/5. In terms of biological role, acts in the modification of cell walls via demethylesterification of cell wall pectin. The chain is Probable pectinesterase/pectinesterase inhibitor 35 (PME35) from Arabidopsis thaliana (Mouse-ear cress).